Here is a 318-residue protein sequence, read N- to C-terminus: Mediator of RNA polymerase II transcription subunit 3 (318 aa).

The span at 134-156 (SAAGITKTSSGNDGNTTGSTANT) shows a compositional bias: polar residues. A disordered region spans residues 134–225 (SAAGITKTSS…PSLKQIPNTQ (92 aa)). A compositionally biased stretch (low complexity) spans 192-217 (HTGPATAPTTSNSAASAAAAAANTPS).

Belongs to the Mediator complex subunit 3 family. As to quaternary structure, component of the Mediator complex.

It is found in the nucleus. Component of the Mediator complex, a coactivator involved in regulated gene transcription of nearly all RNA polymerase II-dependent genes. Mediator functions as a bridge to convey information from gene-specific regulatory proteins to the basal RNA polymerase II transcription machinery. Mediator is recruited to promoters by direct interactions with regulatory proteins and serves as a scaffold for the assembly of a functional preinitiation complex with RNA polymerase II and the general transcription factors. This chain is Mediator of RNA polymerase II transcription subunit 3 (PGD1), found in Kluyveromyces lactis (strain ATCC 8585 / CBS 2359 / DSM 70799 / NBRC 1267 / NRRL Y-1140 / WM37) (Yeast).